A 425-amino-acid chain; its full sequence is Histone-binding protein RBBP4 (425 aa).

Alanine 2 carries the post-translational modification N-acetylalanine. WD repeat units lie at residues 32–125 (YDLV…NHEG), 126–175 (EVNR…RLRG), 176–223 (HQKE…KTIF), 225–270 (GHTA…HSVD), 271–314 (AHTA…HSFE), 315–371 (SHKD…FIHG), and 372–404 (GHTA…VWQM).

It belongs to the WD repeat RBAP46/RBAP48/MSI1 family. As to quaternary structure, binds directly to histone H4, probably via helix 1 of the histone fold, a region that is not accessible when histone H4 is in chromatin. Forms a large corepressor complex that contains ncor1, sin3a and possibly sin3b, histone deacetylases hdac2, hdac1, rbbp4 and possibly rbbp7.

The protein localises to the nucleus. Its subcellular location is the chromosome. It localises to the telomere. Its function is as follows. Core histone-binding subunit that may target chromatin assembly factors, chromatin remodeling factors and histone deacetylases to their histone substrates in a manner that is regulated by nucleosomal DNA. Component of several complexes which regulate chromatin metabolism. In Xenopus tropicalis (Western clawed frog), this protein is Histone-binding protein RBBP4 (rbbp4).